Consider the following 338-residue polypeptide: Anthranilate phosphoribosyltransferase (338 aa).

5-phospho-alpha-D-ribose 1-diphosphate is bound by residues glycine 80, 83-84 (GD), threonine 88, 90-93 (NIST), 108-116 (KHGNRAVSS), and serine 120. Glycine 80 lines the anthranilate pocket. Mg(2+) is bound at residue serine 92. Asparagine 111 provides a ligand contact to anthranilate. Anthranilate is bound at residue arginine 166. 2 residues coordinate Mg(2+): aspartate 225 and glutamate 226.

Belongs to the anthranilate phosphoribosyltransferase family. Homodimer. It depends on Mg(2+) as a cofactor.

The enzyme catalyses N-(5-phospho-beta-D-ribosyl)anthranilate + diphosphate = 5-phospho-alpha-D-ribose 1-diphosphate + anthranilate. Its pathway is amino-acid biosynthesis; L-tryptophan biosynthesis; L-tryptophan from chorismate: step 2/5. Functionally, catalyzes the transfer of the phosphoribosyl group of 5-phosphorylribose-1-pyrophosphate (PRPP) to anthranilate to yield N-(5'-phosphoribosyl)-anthranilate (PRA). The chain is Anthranilate phosphoribosyltransferase from Thermoanaerobacter sp. (strain X514).